The following is a 941-amino-acid chain: Isoleucine--tRNA ligase (941 aa).

The short motif at 58-68 (PYANGDIHIGH) is the 'HIGH' region element. Glu562 contributes to the L-isoleucyl-5'-AMP binding site. Residues 603-607 (KMSKS) carry the 'KMSKS' region motif. Lys606 contacts ATP. Cys904, Cys907, Cys924, and Cys927 together coordinate Zn(2+).

The protein belongs to the class-I aminoacyl-tRNA synthetase family. IleS type 1 subfamily. As to quaternary structure, monomer. Zn(2+) serves as cofactor.

Its subcellular location is the cytoplasm. The catalysed reaction is tRNA(Ile) + L-isoleucine + ATP = L-isoleucyl-tRNA(Ile) + AMP + diphosphate. Functionally, catalyzes the attachment of isoleucine to tRNA(Ile). As IleRS can inadvertently accommodate and process structurally similar amino acids such as valine, to avoid such errors it has two additional distinct tRNA(Ile)-dependent editing activities. One activity is designated as 'pretransfer' editing and involves the hydrolysis of activated Val-AMP. The other activity is designated 'posttransfer' editing and involves deacylation of mischarged Val-tRNA(Ile). The sequence is that of Isoleucine--tRNA ligase from Alkalilimnicola ehrlichii (strain ATCC BAA-1101 / DSM 17681 / MLHE-1).